The primary structure comprises 176 residues: Inner membrane-spanning protein YciB (176 aa).

The next 5 membrane-spanning stretches (helical) occupy residues 24-44, 49-69, 76-96, 121-141, and 149-169; these read TATAVAIGATLVQIAWVAFRH, PMLWVSLGVVTVFGGATLVLH, WKPTVLYWAFSVVLVVSALGF, YVWAVFFVLLGILNLFVAYNF, and FKLFGATGCLVVFIVGQSLWL.

It belongs to the YciB family.

The protein resides in the cell inner membrane. Its function is as follows. Plays a role in cell envelope biogenesis, maintenance of cell envelope integrity and membrane homeostasis. This chain is Inner membrane-spanning protein YciB, found in Paraburkholderia phymatum (strain DSM 17167 / CIP 108236 / LMG 21445 / STM815) (Burkholderia phymatum).